The primary structure comprises 440 residues: Chromosome partition protein MukF (440 aa).

Positions 208–236 (LSETSGTLRELQDTLEAAGDKLQANLLRI) are leucine-zipper.

This sequence belongs to the MukF family. In terms of assembly, interacts, and probably forms a ternary complex, with MukE and MukB via its C-terminal region. The complex formation is stimulated by calcium or magnesium. It is required for an interaction between MukE and MukB.

Its subcellular location is the cytoplasm. The protein resides in the nucleoid. Its function is as follows. Involved in chromosome condensation, segregation and cell cycle progression. May participate in facilitating chromosome segregation by condensation DNA from both sides of a centrally located replisome during cell division. Not required for mini-F plasmid partitioning. Probably acts via its interaction with MukB and MukE. Overexpression results in anucleate cells. It has a calcium binding activity. The protein is Chromosome partition protein MukF of Escherichia coli O9:H4 (strain HS).